Here is a 300-residue protein sequence, read N- to C-terminus: m7GpppN-mRNA hydrolase NUDT17 (300 aa).

Residues Ser88–Leu239 enclose the Nudix hydrolase domain. A Nudix box motif is present at residues Gly127–Gly148. 2 residues coordinate Mg(2+): Glu142 and Glu146.

Belongs to the Nudix hydrolase family. Mg(2+) serves as cofactor. Mn(2+) is required as a cofactor.

It catalyses the reaction a 5'-end (N(7)-methyl 5'-triphosphoguanosine)-ribonucleoside in mRNA + H2O = N(7)-methyl-GDP + a 5'-end phospho-ribonucleoside in mRNA + 2 H(+). Functionally, acts as a decapping enzyme capable of hydrolyzing monomethylated capped RNAs (in vitro). Hydrolyzes monomethylated capped RNA after alpha and beta phosphates to form N(7)-methyl-GDP. Shows low activity towards unmethylated capped RNA. This is m7GpppN-mRNA hydrolase NUDT17 (nudt17) from Danio rerio (Zebrafish).